A 328-amino-acid chain; its full sequence is Protoheme IX farnesyltransferase (328 aa).

The next 8 helical transmembrane spans lie at 31–51 (IILL…KGEV), 53–73 (LFLL…ANAI), 120–140 (VFAN…YVGV), 153–173 (IVIG…AVTG), 181–201 (LLFA…AIYI), 226–246 (IWVY…PLHV), 250–270 (IYAV…WQLL), and 285–305 (YSIY…LPFT).

The protein belongs to the UbiA prenyltransferase family. Protoheme IX farnesyltransferase subfamily.

The protein localises to the cell inner membrane. The catalysed reaction is heme b + (2E,6E)-farnesyl diphosphate + H2O = Fe(II)-heme o + diphosphate. The protein operates within porphyrin-containing compound metabolism; heme O biosynthesis; heme O from protoheme: step 1/1. Its function is as follows. Converts heme B (protoheme IX) to heme O by substitution of the vinyl group on carbon 2 of heme B porphyrin ring with a hydroxyethyl farnesyl side group. In Trichodesmium erythraeum (strain IMS101), this protein is Protoheme IX farnesyltransferase.